The primary structure comprises 228 residues: Ribosomal RNA large subunit methyltransferase E (228 aa).

Glycine 76, tryptophan 78, aspartate 99, aspartate 115, and aspartate 139 together coordinate S-adenosyl-L-methionine. Lysine 179 serves as the catalytic Proton acceptor.

This sequence belongs to the class I-like SAM-binding methyltransferase superfamily. RNA methyltransferase RlmE family.

It localises to the cytoplasm. It catalyses the reaction uridine(2552) in 23S rRNA + S-adenosyl-L-methionine = 2'-O-methyluridine(2552) in 23S rRNA + S-adenosyl-L-homocysteine + H(+). Specifically methylates the uridine in position 2552 of 23S rRNA at the 2'-O position of the ribose in the fully assembled 50S ribosomal subunit. The protein is Ribosomal RNA large subunit methyltransferase E of Bradyrhizobium diazoefficiens (strain JCM 10833 / BCRC 13528 / IAM 13628 / NBRC 14792 / USDA 110).